The primary structure comprises 136 residues: ATP synthase epsilon chain (136 aa).

This sequence belongs to the ATPase epsilon chain family. In terms of assembly, F-type ATPases have 2 components, CF(1) - the catalytic core - and CF(0) - the membrane proton channel. CF(1) has five subunits: alpha(3), beta(3), gamma(1), delta(1), epsilon(1). CF(0) has three main subunits: a, b and c.

Its subcellular location is the cell membrane. Produces ATP from ADP in the presence of a proton gradient across the membrane. The polypeptide is ATP synthase epsilon chain (Ureaplasma urealyticum serovar 10 (strain ATCC 33699 / Western)).